The following is a 113-amino-acid chain: Histone H2B (113 aa).

The disordered stretch occupies residues 1-21 (MPATPAKRAKRVQQEKRHHKK). A compositionally biased stretch (basic residues) spans 7-21 (KRAKRVQQEKRHHKK). Lys109 participates in a covalent cross-link: Glycyl lysine isopeptide (Lys-Gly) (interchain with G-Cter in ubiquitin).

It belongs to the histone H2B family. As to quaternary structure, the nucleosome is a histone octamer containing two molecules each of H2A, H2B, H3 and H4 assembled in one H3-H4 heterotetramer and two H2A-H2B heterodimers. The octamer wraps approximately 147 bp of DNA. In terms of processing, monoubiquitination of Lys-109 gives a specific tag for epigenetic transcriptional activation and is also prerequisite for histone H3 'Lys-4' and 'Lys-79' methylation.

Its subcellular location is the nucleus. It is found in the chromosome. Its function is as follows. Core component of nucleosome. Nucleosomes wrap and compact DNA into chromatin, limiting DNA accessibility to the cellular machineries which require DNA as a template. Histones thereby play a central role in transcription regulation, DNA repair, DNA replication and chromosomal stability. DNA accessibility is regulated via a complex set of post-translational modifications of histones, also called histone code, and nucleosome remodeling. This chain is Histone H2B (H2B1), found in Euplotes crassus.